The following is a 68-amino-acid chain: Bifunctional protein GlmU (68 aa).

UDP-N-acetyl-alpha-D-glucosamine-binding positions include Leu9 to Gly12 and Lys23.

The protein in the N-terminal section; belongs to the N-acetylglucosamine-1-phosphate uridyltransferase family. In the C-terminal section; belongs to the transferase hexapeptide repeat family. As to quaternary structure, homotrimer. Mg(2+) serves as cofactor.

Its subcellular location is the cytoplasm. The catalysed reaction is alpha-D-glucosamine 1-phosphate + acetyl-CoA = N-acetyl-alpha-D-glucosamine 1-phosphate + CoA + H(+). The enzyme catalyses N-acetyl-alpha-D-glucosamine 1-phosphate + UTP + H(+) = UDP-N-acetyl-alpha-D-glucosamine + diphosphate. It participates in nucleotide-sugar biosynthesis; UDP-N-acetyl-alpha-D-glucosamine biosynthesis; N-acetyl-alpha-D-glucosamine 1-phosphate from alpha-D-glucosamine 6-phosphate (route II): step 2/2. Its pathway is nucleotide-sugar biosynthesis; UDP-N-acetyl-alpha-D-glucosamine biosynthesis; UDP-N-acetyl-alpha-D-glucosamine from N-acetyl-alpha-D-glucosamine 1-phosphate: step 1/1. The protein operates within bacterial outer membrane biogenesis; LPS lipid A biosynthesis. Functionally, catalyzes the last two sequential reactions in the de novo biosynthetic pathway for UDP-N-acetylglucosamine (UDP-GlcNAc). The C-terminal domain catalyzes the transfer of acetyl group from acetyl coenzyme A to glucosamine-1-phosphate (GlcN-1-P) to produce N-acetylglucosamine-1-phosphate (GlcNAc-1-P), which is converted into UDP-GlcNAc by the transfer of uridine 5-monophosphate (from uridine 5-triphosphate), a reaction catalyzed by the N-terminal domain. This chain is Bifunctional protein GlmU (glmU), found in Priestia megaterium (Bacillus megaterium).